Here is a 550-residue protein sequence, read N- to C-terminus: Glucose-6-phosphate isomerase (550 aa).

Glu-357 acts as the Proton donor in catalysis. Active-site residues include His-389 and Lys-509.

The protein belongs to the GPI family.

The protein localises to the cytoplasm. The enzyme catalyses alpha-D-glucose 6-phosphate = beta-D-fructose 6-phosphate. The protein operates within carbohydrate biosynthesis; gluconeogenesis. Its pathway is carbohydrate degradation; glycolysis; D-glyceraldehyde 3-phosphate and glycerone phosphate from D-glucose: step 2/4. Its function is as follows. Catalyzes the reversible isomerization of glucose-6-phosphate to fructose-6-phosphate. The chain is Glucose-6-phosphate isomerase from Anaeromyxobacter dehalogenans (strain 2CP-C).